A 382-amino-acid polypeptide reads, in one-letter code: Alkanesulfonate monooxygenase (382 aa).

This sequence belongs to the SsuD family. As to quaternary structure, homotetramer.

The catalysed reaction is an alkanesulfonate + FMNH2 + O2 = an aldehyde + FMN + sulfite + H2O + 2 H(+). Functionally, catalyzes the desulfonation of aliphatic sulfonates. The chain is Alkanesulfonate monooxygenase from Yersinia pestis bv. Antiqua (strain Antiqua).